Here is a 108-residue protein sequence, read N- to C-terminus: Large ribosomal subunit protein uL22 (108 aa).

The protein belongs to the universal ribosomal protein uL22 family. As to quaternary structure, part of the 50S ribosomal subunit.

Functionally, this protein binds specifically to 23S rRNA; its binding is stimulated by other ribosomal proteins, e.g. L4, L17, and L20. It is important during the early stages of 50S assembly. It makes multiple contacts with different domains of the 23S rRNA in the assembled 50S subunit and ribosome. Its function is as follows. The globular domain of the protein is located near the polypeptide exit tunnel on the outside of the subunit, while an extended beta-hairpin is found that lines the wall of the exit tunnel in the center of the 70S ribosome. This chain is Large ribosomal subunit protein uL22, found in Desulfatibacillum aliphaticivorans.